The following is a 69-amino-acid chain: Iota-conotoxin LtIIIA (69 aa).

The signal sequence occupies residues 1–20 (MLKMGVLLFTFLVLFPLTTL). The propeptide occupies 21–52 (ELDTDRPVERHAAIKQDLKPQERRGIRLHAPR). 2 positions are modified to 4-carboxyglutamate: E54 and E57. Cystine bridges form between C55–C67, C56–C65, and C61–C68. Position 58 is a 4-hydroxyproline (P58).

In terms of tissue distribution, expressed by the venom duct.

The protein resides in the secreted. Its function is as follows. Iota-conotoxins bind to voltage-gated sodium channels and act as agonists by shifting the voltage-dependence of activation to more hyperpolarized levels. This toxin enhances tetrodotoxin-sensitive sodium current in rat dorsal root ganglion neurons. This chain is Iota-conotoxin LtIIIA, found in Conus litteratus (Lettered cone).